Here is a 245-residue protein sequence, read N- to C-terminus: Phosphoadenosine 5'-phosphosulfate reductase (245 aa).

Cys-239 functions as the Nucleophile; cysteine thiosulfonate intermediate in the catalytic mechanism.

The protein belongs to the PAPS reductase family. CysH subfamily.

The protein resides in the cytoplasm. The catalysed reaction is [thioredoxin]-disulfide + sulfite + adenosine 3',5'-bisphosphate + 2 H(+) = [thioredoxin]-dithiol + 3'-phosphoadenylyl sulfate. It functions in the pathway sulfur metabolism; hydrogen sulfide biosynthesis; sulfite from sulfate: step 3/3. Its function is as follows. Catalyzes the formation of sulfite from phosphoadenosine 5'-phosphosulfate (PAPS) using thioredoxin as an electron donor. This chain is Phosphoadenosine 5'-phosphosulfate reductase, found in Shewanella oneidensis (strain ATCC 700550 / JCM 31522 / CIP 106686 / LMG 19005 / NCIMB 14063 / MR-1).